The sequence spans 728 residues: Catalase-peroxidase (728 aa).

The segment at residues 91–218 (WHSAGTYRTA…LAAVQMGLIY (128 aa)) is a cross-link (tryptophyl-tyrosyl-methioninium (Trp-Tyr) (with M-244)). Catalysis depends on histidine 92, which acts as the Proton acceptor. The segment at residues 218-244 (YVNPEGPDGTPDPVAAAHDIRETFARM) is a cross-link (tryptophyl-tyrosyl-methioninium (Tyr-Met) (with W-91)). Position 259 (histidine 259) interacts with heme b.

The protein belongs to the peroxidase family. Peroxidase/catalase subfamily. In terms of assembly, homodimer or homotetramer. It depends on heme b as a cofactor. Formation of the three residue Trp-Tyr-Met cross-link is important for the catalase, but not the peroxidase activity of the enzyme.

The catalysed reaction is H2O2 + AH2 = A + 2 H2O. It catalyses the reaction 2 H2O2 = O2 + 2 H2O. Its function is as follows. Bifunctional enzyme with both catalase and broad-spectrum peroxidase activity. The chain is Catalase-peroxidase from Burkholderia lata (strain ATCC 17760 / DSM 23089 / LMG 22485 / NCIMB 9086 / R18194 / 383).